A 248-amino-acid polypeptide reads, in one-letter code: Ribosomal RNA small subunit methyltransferase G (248 aa).

S-adenosyl-L-methionine is bound by residues G85, F90, 137-138 (IE), and R156.

This sequence belongs to the methyltransferase superfamily. RNA methyltransferase RsmG family.

The protein localises to the cytoplasm. Its function is as follows. Specifically methylates the N7 position of a guanine in 16S rRNA. The sequence is that of Ribosomal RNA small subunit methyltransferase G from Parasynechococcus marenigrum (strain WH8102).